Consider the following 767-residue polypeptide: Polyribonucleotide nucleotidyltransferase (767 aa).

Aspartate 509 and aspartate 515 together coordinate Mg(2+). Residues 575–634 enclose the KH domain; it reads PRILTVKVPIDKIGEVIGPKGKMINSIQDETGAEITIEDDGTIYIGATDGPSAEAARDAI. The region spanning 646–718 is the S1 motif domain; that stretch reads GERYLGTVVK…ERGKLSLVPV (73 aa). Positions 725–767 are disordered; sequence AVAAPNGGESPNGAKKTDASGNGAKQPRRRRRTRSSSRSSENT. The segment covering 750-759 has biased composition (basic residues); sequence QPRRRRRTRS.

Belongs to the polyribonucleotide nucleotidyltransferase family. The cofactor is Mg(2+).

It is found in the cytoplasm. It carries out the reaction RNA(n+1) + phosphate = RNA(n) + a ribonucleoside 5'-diphosphate. Functionally, involved in mRNA degradation. Catalyzes the phosphorolysis of single-stranded polyribonucleotides processively in the 3'- to 5'-direction. The chain is Polyribonucleotide nucleotidyltransferase from Thermobifida fusca (strain YX).